A 108-amino-acid chain; its full sequence is Glutaredoxin-1 (108 aa).

In terms of domain architecture, Glutaredoxin spans 3 to 106 (EEFVQQRLAN…DILSSIGVLR (104 aa)). Cys-23 and Cys-26 form a disulfide bridge.

It belongs to the glutaredoxin family.

It is found in the virion. Displays thioltransferase and dehydroascorbate reductase activities. In Vaccinia virus (strain Copenhagen) (VACV), this protein is Glutaredoxin-1 (OPG075).